A 795-amino-acid chain; its full sequence is Plakophilin-2 (795 aa).

The required for binding to single-stranded DNA stretch occupies residues 1-318; it reads MAVPGSLAEC…MTLERAVNML (318 aa). S44 is subject to Phosphoserine. Residue R46 is modified to Omega-N-methylarginine. A phosphoserine mark is found at S82, S132, S135, S151, S154, S155, S172, S188, and S232. 2 disordered regions span residues 197-233 and 245-274; these read GTAR…SHSA and SQAR…REPG. The segment covering 245–257 has biased composition (polar residues); sequence SQARLQSTQSRTA. The segment covering 258–268 has biased composition (low complexity); sequence RSSWPRSSVRS. Residues S265 and S287 each carry the phosphoserine modification. ARM repeat units lie at residues 299-339, 343-382, 385-425, 484-530, 585-625, 633-672, 677-718, and 721-763; these read DAQL…QHES, SEAR…NLVF, NDNK…NLSS, PDGR…NLSY, PHGI…NLTA, LVAR…NLSR, QNEI…NLMQ, and YQNA…SLWA.

It belongs to the beta-catenin family. As to quaternary structure, interacts with DSC2. Interacts with JUP. Interacts with KRT5/CK5, KRT8/CK8, KRT14/CK14, KRT18/CK18 and VIM. Interacts (via N-terminus) with MARK3/C-TAK1. Interacts with DSP. Interacts with DSG1, DSG2 and DSG3. Interacts (via N-terminus) with CTNNB1. Interacts with CDH1. Interacts with the RNA polymerase III (Pol III) complex proteins POLR3A/RPC155, POLR3F/RPC39 and POLR3C/RPC82. Interacts with CTNNA3. Interacts (via N-terminus) with SCN5A/Nav1.5. Interacts with ANK3/ANKG and GJA1/CX43. As to expression, expressed in cardiomyocytes in the heart (at protein level).

The protein localises to the nucleus. The protein resides in the cell junction. It localises to the desmosome. Its subcellular location is the cytoplasm. Functionally, a component of desmosome cell-cell junctions which are required for positive regulation of cellular adhesion. Regulates focal adhesion turnover resulting in changes in focal adhesion size, cell adhesion and cell spreading, potentially via transcriptional modulation of beta-integrins. Required to maintain gingival epithelial barrier function. Important component of the desmosome that is also required for localization of desmosome component proteins such as DSC2, DSG2 and JUP to the desmosome cell-cell junction. Required for the formation of desmosome cell junctions in cardiomyocytes, thereby required for the correct formation of the heart, specifically trabeculation and formation of the atria walls. Loss of desmosome cell junctions leads to mis-localization of DSP and DSG2 resulting in disruption of cell-cell adhesion and disordered intermediate filaments. Modulates profibrotic gene expression in cardiomyocytes via regulation of DSP expression and subsequent activation of downstream TGFB1 and MAPK14/p38 MAPK signaling. Required for cardiac sodium current propagation and electrical synchrony in cardiac myocytes, via ANK3 stabilization and modulation of SCN5A/Nav1.5 localization to cell-cell junctions. Required for mitochondrial function, nuclear envelope integrity and positive regulation of SIRT3 transcription via maintaining DES localization at its nuclear envelope and cell tip anchoring points, and thereby preserving regulation of the transcriptional program. Maintenance of nuclear envelope integrity protects against DNA damage and transcriptional dysregulation of genes, especially those involved in the electron transport chain, thereby preserving mitochondrial function and protecting against superoxide radical anion generation. Binds single-stranded DNA (ssDNA). May regulate the localization of GJA1 to gap junctions in intercalated disks of the heart. The polypeptide is Plakophilin-2 (Mus musculus (Mouse)).